The following is a 218-amino-acid chain: Ribonuclease T (218 aa).

The region spanning valine 22–phenylalanine 196 is the Exonuclease domain. Residues aspartate 25, glutamate 27, histidine 183, and aspartate 188 each coordinate Mg(2+). The active-site Proton donor/acceptor is the histidine 183.

The protein belongs to the RNase T family. In terms of assembly, homodimer. Mg(2+) serves as cofactor.

Functionally, trims short 3' overhangs of a variety of RNA species, leaving a one or two nucleotide 3' overhang. Responsible for the end-turnover of tRNA: specifically removes the terminal AMP residue from uncharged tRNA (tRNA-C-C-A). Also appears to be involved in tRNA biosynthesis. The chain is Ribonuclease T from Hahella chejuensis (strain KCTC 2396).